The primary structure comprises 401 residues: Elongation factor Tu 2 (401 aa).

The tr-type G domain maps to 10-209 (KPHVNVGTIG…AVDEYIPTPV (200 aa)). Residues 19–26 (GHVDHGKT) are G1. 19–26 (GHVDHGKT) provides a ligand contact to GTP. Thr26 is a Mg(2+) binding site. Residues 60–64 (GITIA) are G2. Residues 81–84 (DCPG) form a G3 region. Residues 81 to 85 (DCPGH) and 136 to 139 (NKVD) contribute to the GTP site. Residues 136–139 (NKVD) are G4. The segment at 174–176 (SAL) is G5.

This sequence belongs to the TRAFAC class translation factor GTPase superfamily. Classic translation factor GTPase family. EF-Tu/EF-1A subfamily. As to quaternary structure, monomer.

Its subcellular location is the cytoplasm. The catalysed reaction is GTP + H2O = GDP + phosphate + H(+). Its function is as follows. GTP hydrolase that promotes the GTP-dependent binding of aminoacyl-tRNA to the A-site of ribosomes during protein biosynthesis. In Roseiflexus castenholzii (strain DSM 13941 / HLO8), this protein is Elongation factor Tu 2.